Here is a 415-residue protein sequence, read N- to C-terminus: Serine hydroxymethyltransferase (415 aa).

Residues leucine 115 and 119–121 (GHL) each bind (6S)-5,6,7,8-tetrahydrofolate. Lysine 224 is subject to N6-(pyridoxal phosphate)lysine. 348–350 (SPF) contributes to the (6S)-5,6,7,8-tetrahydrofolate binding site.

Belongs to the SHMT family. As to quaternary structure, homodimer. Pyridoxal 5'-phosphate serves as cofactor.

It is found in the cytoplasm. The enzyme catalyses (6R)-5,10-methylene-5,6,7,8-tetrahydrofolate + glycine + H2O = (6S)-5,6,7,8-tetrahydrofolate + L-serine. It participates in one-carbon metabolism; tetrahydrofolate interconversion. It functions in the pathway amino-acid biosynthesis; glycine biosynthesis; glycine from L-serine: step 1/1. Its function is as follows. Catalyzes the reversible interconversion of serine and glycine with tetrahydrofolate (THF) serving as the one-carbon carrier. This reaction serves as the major source of one-carbon groups required for the biosynthesis of purines, thymidylate, methionine, and other important biomolecules. Also exhibits THF-independent aldolase activity toward beta-hydroxyamino acids, producing glycine and aldehydes, via a retro-aldol mechanism. The protein is Serine hydroxymethyltransferase of Latilactobacillus sakei subsp. sakei (strain 23K) (Lactobacillus sakei subsp. sakei).